The following is a 667-amino-acid chain: Cysteine-rich receptor-like protein kinase 11 (667 aa).

Residues 1–24 (MKQRSLFSVLCFFFISFGVASVSA) form the signal peptide. 2 consecutive Gnk2-homologous domains span residues 25 to 129 (QTCT…NTSF) and 135 to 248 (LNPR…LYTY). Residues 25–292 (QTCTTDKGTF…SKGISAGVVV (268 aa)) lie on the Extracellular side of the membrane. Asn37, Asn54, Asn64, Asn106, Asn126, Asn150, and Asn254 each carry an N-linked (GlcNAc...) asparagine glycan. Residues 259–268 (SPPPEPPVTV) are compositionally biased toward pro residues. Positions 259-282 (SPPPEPPVTVPQPAGDQDNPTNND) are disordered. Asn281 carries N-linked (GlcNAc...) asparagine glycosylation. Residues 293 to 313 (AITVPTVIAILILLVLGFVLF) traverse the membrane as a helical segment. Residues 314–667 (RRRKSYQRTK…YTSKSSSFSS (354 aa)) are Cytoplasmic-facing. Residues 350–629 (FSTSNKLGEG…IILMLTSNTI (280 aa)) enclose the Protein kinase domain. ATP is bound by residues 356–364 (LGEGGFGAV) and Lys378. Tyr423 bears the Phosphotyrosine mark. Asp475 functions as the Proton acceptor in the catalytic mechanism. Ser479 is subject to Phosphoserine. The residue at position 515 (Thr515) is a Phosphothreonine. Position 523 is a phosphotyrosine (Tyr523).

It belongs to the protein kinase superfamily. Ser/Thr protein kinase family. CRK subfamily. In terms of tissue distribution, detected in root, stem, leaf and flower.

Its subcellular location is the membrane. It catalyses the reaction L-seryl-[protein] + ATP = O-phospho-L-seryl-[protein] + ADP + H(+). The catalysed reaction is L-threonyl-[protein] + ATP = O-phospho-L-threonyl-[protein] + ADP + H(+). This Arabidopsis thaliana (Mouse-ear cress) protein is Cysteine-rich receptor-like protein kinase 11 (CRK11).